Here is a 264-residue protein sequence, read N- to C-terminus: JmjC domain-containing protein 8 (264 aa).

Residues 1 to 23 (MAPASRLLALWALAAVALPGSGA) form the signal peptide. N-linked (GlcNAc...) asparagine glycans are attached at residues asparagine 130, asparagine 140, and asparagine 209. The JmjC domain occupies 131–264 (DTLYFFGDNN…TSVFISTFLG (134 aa)).

In terms of assembly, oligomer. Dimer. Interacts with PKM; regulates angiogenesis and metabolism. Post-translationally, N-glycosylated.

It localises to the endoplasmic reticulum lumen. Its subcellular location is the cytoplasm. In terms of biological role, functions as a positive regulator of TNF-induced NF-kappa-B signaling. Regulates angiogenesis and cellular metabolism through interaction with PKM. This chain is JmjC domain-containing protein 8, found in Homo sapiens (Human).